Reading from the N-terminus, the 198-residue chain is Small ribosomal subunit protein uS4 (198 aa).

The disordered stretch occupies residues 26-45 (LKKRPYAPGQHGQRRSKLSN). In terms of domain architecture, S4 RNA-binding spans 91 to 154 (SRLDNVVYRL…KNLTIVKEAL (64 aa)).

Belongs to the universal ribosomal protein uS4 family. As to quaternary structure, part of the 30S ribosomal subunit. Contacts protein S5. The interaction surface between S4 and S5 is involved in control of translational fidelity.

One of the primary rRNA binding proteins, it binds directly to 16S rRNA where it nucleates assembly of the body of the 30S subunit. Its function is as follows. With S5 and S12 plays an important role in translational accuracy. The chain is Small ribosomal subunit protein uS4 from Acholeplasma laidlawii (strain PG-8A).